Reading from the N-terminus, the 381-residue chain is Succinyl-diaminopimelate desuccinylase (381 aa).

H71 contributes to the Zn(2+) binding site. Residue D73 is part of the active site. D104 contacts Zn(2+). The active-site Proton acceptor is E138. Zn(2+) is bound by residues E139, E167, and H353.

Belongs to the peptidase M20A family. DapE subfamily. Homodimer. Requires Zn(2+) as cofactor. It depends on Co(2+) as a cofactor.

The catalysed reaction is N-succinyl-(2S,6S)-2,6-diaminopimelate + H2O = (2S,6S)-2,6-diaminopimelate + succinate. It participates in amino-acid biosynthesis; L-lysine biosynthesis via DAP pathway; LL-2,6-diaminopimelate from (S)-tetrahydrodipicolinate (succinylase route): step 3/3. Its function is as follows. Catalyzes the hydrolysis of N-succinyl-L,L-diaminopimelic acid (SDAP), forming succinate and LL-2,6-diaminopimelate (DAP), an intermediate involved in the bacterial biosynthesis of lysine and meso-diaminopimelic acid, an essential component of bacterial cell walls. The chain is Succinyl-diaminopimelate desuccinylase from Shewanella pealeana (strain ATCC 700345 / ANG-SQ1).